Here is a 680-residue protein sequence, read N- to C-terminus: DNA-directed RNA polymerase subunit beta' (680 aa).

Zn(2+)-binding residues include C69, C71, C87, and C90. The Mg(2+) site is built by D489, D491, and D493.

The protein belongs to the RNA polymerase beta' chain family. RpoC1 subfamily. As to quaternary structure, in plastids the minimal PEP RNA polymerase catalytic core is composed of four subunits: alpha, beta, beta', and beta''. When a (nuclear-encoded) sigma factor is associated with the core the holoenzyme is formed, which can initiate transcription. Requires Mg(2+) as cofactor. It depends on Zn(2+) as a cofactor.

The protein resides in the plastid. It localises to the chloroplast. It catalyses the reaction RNA(n) + a ribonucleoside 5'-triphosphate = RNA(n+1) + diphosphate. Its function is as follows. DNA-dependent RNA polymerase catalyzes the transcription of DNA into RNA using the four ribonucleoside triphosphates as substrates. This Aethionema grandiflorum (Persian stone-cress) protein is DNA-directed RNA polymerase subunit beta'.